The sequence spans 150 residues: MAELLDRTDKMLLEELKKNARENIAALSKKLGIPRTTVHYRIKRLLEEGIIEKFTIKPNYKKLNLGTTAFVLIRYDPDSGLTQKEVAEQIAKIPGVYEVHIVAGEWDILLKVRAANAEEVGKIVIEKLREIKGVGQTVTMVSFVTIKEEI.

The HTH asnC-type domain maps to L5–G66. A DNA-binding region (H-T-H motif) is located at residues I24–K43.

This is an uncharacterized protein from Pyrococcus furiosus (strain ATCC 43587 / DSM 3638 / JCM 8422 / Vc1).